The sequence spans 349 residues: PDZ and LIM domain protein 2 (349 aa).

One can recognise a PDZ domain in the interval 1–84 (MALTVDVAGP…PLRLQLDRSQ (84 aa)). Residues 74 to 147 (SPLRLQLDRS…TPPPTSPVAL (74 aa)) form a disordered region. Residues 81–94 (DRSQTASPGQTNGE) show a composition bias toward polar residues. 5 positions are modified to phosphoserine: Ser124, Ser127, Ser129, Ser134, and Ser137. Phosphothreonine occurs at positions 138 and 142. A phosphoserine mark is found at Ser143 and Ser163. The disordered stretch occupies residues 169 to 212 (AHHLTYPGHPTSQQAGHSSPSDSAVRVLLHSPGRPSSPRFSSLD). Polar residues predominate over residues 178 to 190 (PTSQQAGHSSPSD). A phosphoserine mark is found at Ser199, Ser204, Ser205, Ser209, Ser210, and Ser263. The span at 199 to 210 (SPGRPSSPRFSS) shows a compositional bias: low complexity. The LIM zinc-binding domain occupies 281 to 341 (HTCEKCSVNI…EKHARQRYSM (61 aa)).

As to quaternary structure, interacts with alpha-actinins ACTN1 and ACTN4, FLNA and MYH9. Interacts (via LIM zinc-binding domain) with MKRN2. Highly expressed in lung. Expressed at intermediate level in kidney, testis and spleen. Weakly expressed in heart and brain.

It localises to the cytoplasm. The protein resides in the cytoskeleton. Probable adapter protein located at the actin cytoskeleton that promotes cell attachment. Necessary for the migratory capacity of epithelial cells. Overexpression enhances cell adhesion to collagen and fibronectin and suppresses anchorage independent growth. May contribute to tumor cell migratory capacity. The sequence is that of PDZ and LIM domain protein 2 (Pdlim2) from Mus musculus (Mouse).